A 335-amino-acid polypeptide reads, in one-letter code: N-acetyl-gamma-glutamyl-phosphate reductase (335 aa).

Residue Cys-156 is part of the active site.

The protein belongs to the NAGSA dehydrogenase family. Type 1 subfamily.

It is found in the cytoplasm. It carries out the reaction N-acetyl-L-glutamate 5-semialdehyde + phosphate + NADP(+) = N-acetyl-L-glutamyl 5-phosphate + NADPH + H(+). Its pathway is amino-acid biosynthesis; L-arginine biosynthesis; N(2)-acetyl-L-ornithine from L-glutamate: step 3/4. Catalyzes the NADPH-dependent reduction of N-acetyl-5-glutamyl phosphate to yield N-acetyl-L-glutamate 5-semialdehyde. The chain is N-acetyl-gamma-glutamyl-phosphate reductase from Tolumonas auensis (strain DSM 9187 / NBRC 110442 / TA 4).